A 132-amino-acid polypeptide reads, in one-letter code: Small ribosomal subunit protein uS9 (132 aa).

This sequence belongs to the universal ribosomal protein uS9 family.

In Mesomycoplasma hyopneumoniae (strain 232) (Mycoplasma hyopneumoniae), this protein is Small ribosomal subunit protein uS9.